Consider the following 480-residue polypeptide: Probable histone deacetylase 1-A (480 aa).

Residues Lys10 to Asp321 are histone deacetylase. His141 is a catalytic residue. The disordered stretch occupies residues Ser388 to Val480. A compositionally biased stretch (basic and acidic residues) spans Pro401–Cys416. Over residues Asp417–Gly427 the composition is skewed to acidic residues. A compositionally biased stretch (basic and acidic residues) spans Val443–Val480.

It belongs to the histone deacetylase family. HD type 1 subfamily. In terms of assembly, part of a large multiprotein complex that also contains RBBP4. Oocyte.

The protein resides in the nucleus. It localises to the cytoplasm. The enzyme catalyses N(6)-acetyl-L-lysyl-[histone] + H2O = L-lysyl-[histone] + acetate. It carries out the reaction N(6)-acetyl-L-lysyl-[protein] + H2O = L-lysyl-[protein] + acetate. It catalyses the reaction N(6)-(2E)-butenoyl-L-lysyl-[protein] + H2O = (2E)-2-butenoate + L-lysyl-[protein]. Histone deacetylase that catalyzes the deacetylation of lysine residues on the N-terminal part of the core histones (H2A, H2B, H3 and H4). Histone deacetylation gives a tag for epigenetic repression and plays an important role in transcriptional regulation, cell cycle progression and developmental events. Histone deacetylases act via the formation of large multiprotein complexes. Also functions as deacetylase for non-histone proteins. In addition to protein deacetylase activity, also has protein-lysine deacylase activity: acts as a protein decrotonylase by mediating decrotonylation ((2E)-butenoyl) of histones. This chain is Probable histone deacetylase 1-A (hdac1-a), found in Xenopus laevis (African clawed frog).